Here is a 755-residue protein sequence, read N- to C-terminus: Atypical kinase coq-8, mitochondrial (755 aa).

The interval 57-78 (QDVDPLKEPNKTNAPLLSPTLP) is disordered. The segment covering 67 to 78 (KTNAPLLSPTLP) has biased composition (polar residues). ATP-binding positions include 435 to 443 (FACASIGQV) and Lys457. Asp587 acts as the Proton acceptor in catalysis.

It belongs to the protein kinase superfamily. ADCK protein kinase family.

The protein localises to the mitochondrion. It functions in the pathway cofactor biosynthesis; ubiquinone biosynthesis. Atypical kinase involved in the biosynthesis of coenzyme Q, also named ubiquinone, an essential lipid-soluble electron transporter for aerobic cellular respiration. Its substrate specificity is still unclear: may act as a protein kinase that mediates phosphorylation of coq-3. According to other reports, acts as a small molecule kinase, possibly a lipid kinase that phosphorylates a prenyl lipid in the ubiquinone biosynthesis pathway, as suggested by its ability to bind coenzyme Q lipid intermediates. The chain is Atypical kinase coq-8, mitochondrial (coq-8) from Caenorhabditis elegans.